Reading from the N-terminus, the 350-residue chain is 3-isopropylmalate dehydrogenase (350 aa).

76–87 (GPKWDNAPKRPE) is a binding site for NAD(+). R94, R104, R132, and D217 together coordinate substrate. The Mg(2+) site is built by D217, D241, and D245. Position 275 to 287 (275 to 287 (GSAPDIANQNIAN)) interacts with NAD(+).

This sequence belongs to the isocitrate and isopropylmalate dehydrogenases family. LeuB type 1 subfamily. As to quaternary structure, homodimer. Mg(2+) is required as a cofactor. The cofactor is Mn(2+).

Its subcellular location is the cytoplasm. The enzyme catalyses (2R,3S)-3-isopropylmalate + NAD(+) = 4-methyl-2-oxopentanoate + CO2 + NADH. It participates in amino-acid biosynthesis; L-leucine biosynthesis; L-leucine from 3-methyl-2-oxobutanoate: step 3/4. In terms of biological role, catalyzes the oxidation of 3-carboxy-2-hydroxy-4-methylpentanoate (3-isopropylmalate) to 3-carboxy-4-methyl-2-oxopentanoate. The product decarboxylates to 4-methyl-2 oxopentanoate. This chain is 3-isopropylmalate dehydrogenase, found in Listeria monocytogenes serovar 1/2a (strain ATCC BAA-679 / EGD-e).